The following is a 294-amino-acid chain: 33 kDa chaperonin (294 aa).

2 cysteine pairs are disulfide-bonded: cysteine 236–cysteine 238 and cysteine 269–cysteine 272.

This sequence belongs to the HSP33 family. Post-translationally, under oxidizing conditions two disulfide bonds are formed involving the reactive cysteines. Under reducing conditions zinc is bound to the reactive cysteines and the protein is inactive.

It localises to the cytoplasm. Redox regulated molecular chaperone. Protects both thermally unfolding and oxidatively damaged proteins from irreversible aggregation. Plays an important role in the bacterial defense system toward oxidative stress. This is 33 kDa chaperonin from Desulforamulus reducens (strain ATCC BAA-1160 / DSM 100696 / MI-1) (Desulfotomaculum reducens).